Here is a 122-residue protein sequence, read N- to C-terminus: Large ribosomal subunit protein uL14c (122 aa).

This sequence belongs to the universal ribosomal protein uL14 family. Part of the 50S ribosomal subunit.

It is found in the plastid. The protein resides in the chloroplast. Its function is as follows. Binds to 23S rRNA. The protein is Large ribosomal subunit protein uL14c of Pinus koraiensis (Korean pine).